A 677-amino-acid polypeptide reads, in one-letter code: L-type lectin-domain containing receptor kinase IV.2 (677 aa).

Positions 1–22 (MFVKLKLIFFFFLLCQIMISSS) are cleaved as a signal peptide. Over 23–291 (QNLNFTYNGF…EPRRISEFYK (269 aa)) the chain is Extracellular. Residues 24–262 (NLNFTYNGFH…EHFLVGWSFR (239 aa)) form a legume-lectin like region. N-linked (GlcNAc...) asparagine glycans are attached at residues N26, N57, N81, N128, N134, N171, N186, and N203. A helical membrane pass occupies residues 292-312 (IGMPLISLSLIFSIIFLAFYI). Over 313–677 (VRRKKKYEEE…IADSLLSGGR (365 aa)) the chain is Cytoplasmic. A Protein kinase domain is found at 347-625 (FKEKDLLGSG…LQYLRGDMAL (279 aa)). ATP-binding positions include 353–361 (LGSGGFGRV) and K376. Catalysis depends on D472, which acts as the Proton acceptor.

In the C-terminal section; belongs to the protein kinase superfamily. Ser/Thr protein kinase family. The protein in the N-terminal section; belongs to the leguminous lectin family.

It localises to the cell membrane. The catalysed reaction is L-seryl-[protein] + ATP = O-phospho-L-seryl-[protein] + ADP + H(+). It carries out the reaction L-threonyl-[protein] + ATP = O-phospho-L-threonyl-[protein] + ADP + H(+). Its function is as follows. Required during pollen development. Involved in resistance response to the pathogenic bacteria Pseudomonas syringae. The sequence is that of L-type lectin-domain containing receptor kinase IV.2 from Arabidopsis thaliana (Mouse-ear cress).